A 229-amino-acid chain; its full sequence is Heptaprenylglyceryl phosphate synthase (229 aa).

A sn-glycerol 1-phosphate-binding site is contributed by Lys-12. The Mg(2+) site is built by Asp-14 and Thr-40. Residues 159 to 164, Gly-189, and 209 to 210 each bind sn-glycerol 1-phosphate; these read YIEYSG and GN.

It belongs to the GGGP/HepGP synthase family. Group I subfamily. In terms of assembly, homodimer. Mg(2+) serves as cofactor.

The enzyme catalyses sn-glycerol 1-phosphate + all-trans-heptaprenyl diphosphate = 3-heptaprenyl-sn-glycero-1-phosphate + diphosphate. It functions in the pathway membrane lipid metabolism; glycerophospholipid metabolism. Functionally, prenyltransferase that catalyzes in vivo the transfer of the heptaprenyl moiety of heptaprenyl pyrophosphate (HepPP; 35 carbon atoms) to the C3 hydroxyl of sn-glycerol-1-phosphate (G1P), producing heptaprenylglyceryl phosphate (HepGP). This reaction is an ether-bond-formation step in the biosynthesis of archaea-type G1P-based membrane lipids found in Bacillales. The sequence is that of Heptaprenylglyceryl phosphate synthase from Staphylococcus saprophyticus subsp. saprophyticus (strain ATCC 15305 / DSM 20229 / NCIMB 8711 / NCTC 7292 / S-41).